The primary structure comprises 295 residues: sn-glycerol-3-phosphate transport system permease protein UgpA (295 aa).

The Cytoplasmic portion of the chain corresponds to 1–11 (MSSFRPVFRSR). Residues 12-32 (WLPYLLVAPQLVITVIFFIWP) form a helical membrane-spanning segment. Over 33-80 (AGEALWYSLQSVDPFGFSSQFVGLENFVALFHDSYYLDAFWTTIKFSA) the chain is Periplasmic. One can recognise an ABC transmembrane type-1 domain in the interval 76–284 (IKFSALVTFS…FLVIILTVVQ (209 aa)). A helical transmembrane segment spans residues 81-101 (LVTFSGLLVSLFFAALVDYVV). The Cytoplasmic portion of the chain corresponds to 102 to 109 (RGSRFYQT). Residues 110 to 130 (LMLLPYAVAPAVAAVLWIFLF) traverse the membrane as a helical segment. The Periplasmic portion of the chain corresponds to 131 to 157 (NPGRGLITHFLGEFGYDWNHAQNSGQA). Residues 158–178 (MFLVVFASVWKQISYNFLFFF) traverse the membrane as a helical segment. At 179-207 (AALQSIPRSLVEAAAIDGAGPIRRFFRLS) the chain is on the cytoplasmic side. Residues 208-228 (LPLIAPVSFFLLVVNLVYAFF) form a helical membrane-spanning segment. Residues 229 to 262 (DTFPVIDAATAGGPVQATTTLIYKIYREGFTGLD) lie on the Periplasmic side of the membrane. Residues 263-283 (LSASAAQSVVLMFLVIILTVV) traverse the membrane as a helical segment. Over 284–295 (QFRYVESKVRYQ) the chain is Cytoplasmic.

The protein belongs to the binding-protein-dependent transport system permease family. UgpAE subfamily. In terms of assembly, the complex is composed of two ATP-binding proteins (UgpC), two transmembrane proteins (UgpA and UgpE) and a solute-binding protein (UgpB).

Its subcellular location is the cell inner membrane. Part of the ABC transporter complex UgpBAEC involved in sn-glycerol-3-phosphate (G3P) import. Probably responsible for the translocation of the substrate across the membrane. The sequence is that of sn-glycerol-3-phosphate transport system permease protein UgpA (ugpA) from Salmonella choleraesuis (strain SC-B67).